The primary structure comprises 1376 residues: DNA-directed RNA polymerase subunit beta (1376 aa).

The protein belongs to the RNA polymerase beta chain family. In terms of assembly, the RNAP catalytic core consists of 2 alpha, 1 beta, 1 beta' and 1 omega subunit. When a sigma factor is associated with the core the holoenzyme is formed, which can initiate transcription.

It catalyses the reaction RNA(n) + a ribonucleoside 5'-triphosphate = RNA(n+1) + diphosphate. In terms of biological role, DNA-dependent RNA polymerase catalyzes the transcription of DNA into RNA using the four ribonucleoside triphosphates as substrates. This chain is DNA-directed RNA polymerase subunit beta, found in Methylorubrum extorquens (strain PA1) (Methylobacterium extorquens).